Reading from the N-terminus, the 253-residue chain is Triosephosphate isomerase (253 aa).

Substrate is bound at residue 8–10; the sequence is NWK. His-93 functions as the Electrophile in the catalytic mechanism. Residue Glu-165 is the Proton acceptor of the active site. Substrate contacts are provided by residues Gly-171, Ser-210, and 231-232; that span reads GG.

This sequence belongs to the triosephosphate isomerase family. Homodimer.

It localises to the cytoplasm. The enzyme catalyses D-glyceraldehyde 3-phosphate = dihydroxyacetone phosphate. It functions in the pathway carbohydrate biosynthesis; gluconeogenesis. The protein operates within carbohydrate degradation; glycolysis; D-glyceraldehyde 3-phosphate from glycerone phosphate: step 1/1. Involved in the gluconeogenesis. Catalyzes stereospecifically the conversion of dihydroxyacetone phosphate (DHAP) to D-glyceraldehyde-3-phosphate (G3P). The sequence is that of Triosephosphate isomerase from Francisella philomiragia subsp. philomiragia (strain ATCC 25017 / CCUG 19701 / FSC 153 / O#319-036).